Reading from the N-terminus, the 245-residue chain is MDKTELIQKAKLAEQAERYDDMATCMKAVTEQGAELSNEERNLLSVAYKNVVGGRRSAWRVISSIEQKTDTSDKKMQLIKDYREKVESELRSICTTVLELLDKYLIANATNPESKVFYLKMKGDYFRYLAEVACGDDRKQTIENSQGAYQEAFDISKKEMQPTHPIRLGLALNFSVFYYEILNNPELACTLAKTAFDEAIAELDTLNEDSYKDSTLIMQLLRDNLTLWTSDSAGEECDAAEGAEN.

It belongs to the 14-3-3 family. Homodimer, and heterodimer with other family members.

It localises to the cytoplasm. Adapter protein implicated in the regulation of a large spectrum of both general and specialized signaling pathways. Binds to a large number of partners, usually by recognition of a phosphoserine or phosphothreonine motif. Binding generally results in the modulation of the activity of the binding partner. The protein is 14-3-3 protein theta (YWHAQ) of Gallus gallus (Chicken).